Here is a 124-residue protein sequence, read N- to C-terminus: Small ribosomal subunit protein uS12 (124 aa).

Asp89 bears the 3-methylthioaspartic acid mark.

It belongs to the universal ribosomal protein uS12 family. As to quaternary structure, part of the 30S ribosomal subunit. Contacts proteins S8 and S17. May interact with IF1 in the 30S initiation complex.

Functionally, with S4 and S5 plays an important role in translational accuracy. Its function is as follows. Interacts with and stabilizes bases of the 16S rRNA that are involved in tRNA selection in the A site and with the mRNA backbone. Located at the interface of the 30S and 50S subunits, it traverses the body of the 30S subunit contacting proteins on the other side and probably holding the rRNA structure together. The combined cluster of proteins S8, S12 and S17 appears to hold together the shoulder and platform of the 30S subunit. This chain is Small ribosomal subunit protein uS12, found in Shewanella baltica (strain OS223).